Reading from the N-terminus, the 478-residue chain is Glutamine synthetase (478 aa).

An Isoglutamyl lysine isopeptide (Lys-Gln) (interchain with Q-Cter in protein Pup) cross-link involves residue lysine 14. The region spanning 16–100 (ENVEYVDIRF…MNFFVHDPFT (85 aa)) is the GS beta-grasp domain. A GS catalytic domain is found at 108–478 (PRNVARKAEN…PYEFSLYYDV (371 aa)). Glutamate 133 and glutamate 135 together coordinate Mg(2+). Glutamate 214 contacts ATP. Positions 219 and 227 each coordinate Mg(2+). 230–232 (YKF) is a binding site for ATP. Residues 271 to 272 (NG) and glycine 272 contribute to the L-glutamate site. Residue histidine 276 participates in Mg(2+) binding. ATP contacts are provided by residues 278–280 (HQS) and serine 280. L-glutamate is bound by residues arginine 329, glutamate 335, and arginine 347. The ATP site is built by arginine 347, arginine 352, and lysine 361. Glutamate 366 is a Mg(2+) binding site. Arginine 368 serves as a coordination point for L-glutamate. Tyrosine 406 is modified (O-AMP-tyrosine).

It belongs to the glutamine synthetase family. Oligomer of 12 subunits arranged in the form of two hexagons. Mg(2+) is required as a cofactor.

Its subcellular location is the cytoplasm. It carries out the reaction L-glutamate + NH4(+) + ATP = L-glutamine + ADP + phosphate + H(+). With respect to regulation, when cellular nitrogen levels are high, the C-terminal adenylyl transferase (AT) of GlnE inhibits GlnA by covalent transfer of an adenylyl group from ATP to Tyr-406. Conversely, when nitrogen levels are low, the N-terminal adenylyl removase (AR) of GlnE activates GlnA by removing the adenylyl group by phosphorolysis. The fully adenylated enzyme complex is inactive. Functionally, involved in nitrogen metabolism via ammonium assimilation. Catalyzes the ATP-dependent biosynthesis of glutamine from glutamate and ammonia. The sequence is that of Glutamine synthetase from Mycolicibacterium smegmatis (strain ATCC 700084 / mc(2)155) (Mycobacterium smegmatis).